We begin with the raw amino-acid sequence, 586 residues long: Dual specificity tyrosine-phosphorylation-regulated kinase 3 (586 aa).

Residues M1–A13 are compositionally biased toward basic and acidic residues. A disordered region spans residues M1–G187. The 314-residue stretch at Y208–I521 folds into the Protein kinase domain. ATP contacts are provided by residues I214–V222, K237, and F287–L290. The Proton acceptor role is filled by D334. Residue Y368 is modified to Phosphotyrosine. The short motif at R467 to K480 is the Nuclear localization signal element.

The protein belongs to the protein kinase superfamily. CMGC Ser/Thr protein kinase family. MNB/DYRK subfamily. As to quaternary structure, interacts with SIRT1. Mg(2+) is required as a cofactor. In terms of processing, ubiquitinated at anaphase by the anaphase-promoting complex (APC/C), leading to its degradation by the proteasome. Protein kinase activity is activated following autophosphorylation at Tyr-368.

Its subcellular location is the nucleus. The protein localises to the cytoplasm. It localises to the nucleus speckle. The protein resides in the cytoplasmic granule. It is found in the cytoskeleton. Its subcellular location is the microtubule organizing center. The protein localises to the centrosome. The enzyme catalyses L-seryl-[protein] + ATP = O-phospho-L-seryl-[protein] + ADP + H(+). It carries out the reaction L-threonyl-[protein] + ATP = O-phospho-L-threonyl-[protein] + ADP + H(+). The catalysed reaction is L-tyrosyl-[protein] + ATP = O-phospho-L-tyrosyl-[protein] + ADP + H(+). Protein kinase activity is activated following autophosphorylation at Tyr-368. In terms of biological role, dual-specificity protein kinase that promotes disassembly of several types of membraneless organelles during mitosis, such as stress granules, nuclear speckles and pericentriolar material. Dual-specificity tyrosine-regulated kinases (DYRKs) autophosphorylate a critical tyrosine residue in their activation loop and phosphorylate their substrate on serine and threonine residues. Acts as a central dissolvase of membraneless organelles during the G2-to-M transition, after the nuclear-envelope breakdown: acts by mediating phosphorylation of multiple serine and threonine residues in unstructured domains of proteins, such as SRRM1 and PCM1. Does not mediate disassembly of all membraneless organelles: disassembly of P-body and nucleolus is not regulated by DYRK3. Dissolution of membraneless organelles at the onset of mitosis is also required to release mitotic regulators, such as ZNF207, from liquid-unmixed organelles where they are sequestered and keep them dissolved during mitosis. Regulates mTORC1 by mediating the dissolution of stress granules: during stressful conditions, DYRK3 partitions from the cytosol to the stress granule, together with mTORC1 components, which prevents mTORC1 signaling. When stress signals are gone, the kinase activity of DYRK3 is required for the dissolution of stress granule and mTORC1 relocation to the cytosol: acts by mediating the phosphorylation of the mTORC1 inhibitor AKT1S1, allowing full reactivation of mTORC1 signaling. Also acts as a negative regulator of EPO-dependent erythropoiesis: may place an upper limit on red cell production during stress erythropoiesis. Inhibits cell death due to cytokine withdrawal in hematopoietic progenitor cells. Promotes cell survival upon genotoxic stress through phosphorylation of SIRT1: this in turn inhibits p53/TP53 activity and apoptosis. The chain is Dual specificity tyrosine-phosphorylation-regulated kinase 3 from Mus musculus (Mouse).